The primary structure comprises 70 residues: Small, acid-soluble spore protein I (70 aa).

It belongs to the SspI family.

Its subcellular location is the spore core. This Bacillus licheniformis (strain ATCC 14580 / DSM 13 / JCM 2505 / CCUG 7422 / NBRC 12200 / NCIMB 9375 / NCTC 10341 / NRRL NRS-1264 / Gibson 46) protein is Small, acid-soluble spore protein I.